The sequence spans 320 residues: Malate dehydrogenase (320 aa).

NAD(+) is bound by residues 10–15 and aspartate 34; that span reads GAGQIG. Residues arginine 83 and arginine 89 each contribute to the substrate site. NAD(+)-binding positions include asparagine 96 and 119–121; that span reads ITN. The substrate site is built by asparagine 121 and arginine 152. Histidine 176 (proton acceptor) is an active-site residue.

The protein belongs to the LDH/MDH superfamily. MDH type 3 family.

The catalysed reaction is (S)-malate + NAD(+) = oxaloacetate + NADH + H(+). Its function is as follows. Catalyzes the reversible oxidation of malate to oxaloacetate. This Methylorubrum populi (strain ATCC BAA-705 / NCIMB 13946 / BJ001) (Methylobacterium populi) protein is Malate dehydrogenase.